The chain runs to 23 residues: Keratin (23 aa).

The 23-residue stretch at 1–23 (YSSQLAQVQGLIGNVESQLAEIR) folds into the IF rod domain. A coil 2 region spans residues 1 to 23 (YSSQLAQVQGLIGNVESQLAEIR).

Belongs to the intermediate filament family.

In Cervus elaphus (Red deer), this protein is Keratin.